The following is a 546-amino-acid chain: Chaperonin GroEL (546 aa).

Residues 30–33, Lys51, 87–91, Gly415, 479–481, and Asp495 each bind ATP; these read TLGP, DGTTT, and NAA.

It belongs to the chaperonin (HSP60) family. As to quaternary structure, forms a cylinder of 14 subunits composed of two heptameric rings stacked back-to-back. Interacts with the co-chaperonin GroES.

Its subcellular location is the cytoplasm. It carries out the reaction ATP + H2O + a folded polypeptide = ADP + phosphate + an unfolded polypeptide.. In terms of biological role, together with its co-chaperonin GroES, plays an essential role in assisting protein folding. The GroEL-GroES system forms a nano-cage that allows encapsulation of the non-native substrate proteins and provides a physical environment optimized to promote and accelerate protein folding. The sequence is that of Chaperonin GroEL from Pseudomonas putida (strain ATCC 47054 / DSM 6125 / CFBP 8728 / NCIMB 11950 / KT2440).